The primary structure comprises 462 residues: 3-ketoacyl-CoA thiolase 2, peroxisomal (462 aa).

Residues 1 to 34 constitute a peroxisome transit peptide; the sequence is MEKAIERQRVLLEHLRPSSSSSHNYEASLSASAC. Cysteine 138 serves as the catalytic Acyl-thioester intermediate. An intrachain disulfide couples cysteine 138 to cysteine 192. Residues histidine 393 and cysteine 425 each act as proton acceptor in the active site.

Belongs to the thiolase-like superfamily. Thiolase family. In terms of assembly, forms homodimers. As to expression, accumulates in etiolated cotyledons and in seedlings, also present in roots, flowers and siliques (at protein level). High levels in wounded leaves.

The protein resides in the peroxisome. The protein localises to the glyoxysome. The catalysed reaction is an acyl-CoA + acetyl-CoA = a 3-oxoacyl-CoA + CoA. It participates in lipid metabolism; fatty acid metabolism. Functionally, involved in long chain fatty-acid beta-oxidation prior to gluconeogenesis during germination and subsequent seedling growth. Confers sensitivity to 2,4-dichlorophenoxybutiric acid (2,4-DB). Required for local and systemic induction of jasmonic acid (JA) biosynthesis after wounding. Seems to be involved in JA biosynthesis during senescence. May be involved in the positive regulation of abscisic acid-activated signaling pathway. The sequence is that of 3-ketoacyl-CoA thiolase 2, peroxisomal (PED1) from Arabidopsis thaliana (Mouse-ear cress).